A 165-amino-acid polypeptide reads, in one-letter code: NADPH-dependent 7-cyano-7-deazaguanine reductase (165 aa).

Residue cysteine 56 is the Thioimide intermediate of the active site. Residue aspartate 63 is the Proton donor of the active site. Substrate is bound by residues 78–80 (VES) and 97–98 (HE).

It belongs to the GTP cyclohydrolase I family. QueF type 1 subfamily.

It localises to the cytoplasm. The catalysed reaction is 7-aminomethyl-7-carbaguanine + 2 NADP(+) = 7-cyano-7-deazaguanine + 2 NADPH + 3 H(+). It participates in tRNA modification; tRNA-queuosine biosynthesis. Its function is as follows. Catalyzes the NADPH-dependent reduction of 7-cyano-7-deazaguanine (preQ0) to 7-aminomethyl-7-deazaguanine (preQ1). This chain is NADPH-dependent 7-cyano-7-deazaguanine reductase, found in Oceanobacillus iheyensis (strain DSM 14371 / CIP 107618 / JCM 11309 / KCTC 3954 / HTE831).